The sequence spans 167 residues: Endoribonuclease YbeY (167 aa).

The Zn(2+) site is built by His131, His135, and His141.

Belongs to the endoribonuclease YbeY family. Requires Zn(2+) as cofactor.

Its subcellular location is the cytoplasm. Its function is as follows. Single strand-specific metallo-endoribonuclease involved in late-stage 70S ribosome quality control and in maturation of the 3' terminus of the 16S rRNA. In Rickettsia rickettsii (strain Sheila Smith), this protein is Endoribonuclease YbeY.